Reading from the N-terminus, the 252-residue chain is MSRKPIIAGNWKMNKTAAEAREFIDAVKNNIPSNNLVDTVIGSPALFLEGMKKGVKGTELQVAAQNCYWEDFGAFTGETSPAALAALGVDYVIIGHSERRDYFHETDQEINKKAHAIFKHKMTPILCCGESLETYEAGKTAEWIEGQITADLKGLSAEQVSSMVIAYEPIWAIGTGKSADANIADDICGVVRATVEKLYGKEVAQAVRIQYGGSVKPENVAEYMAKENVDGALVGGASLQADSFLALLDFVK.

Position 10–12 (10–12 (NWK)) interacts with substrate. The Electrophile role is filled by histidine 96. Glutamate 168 (proton acceptor) is an active-site residue. Substrate-binding positions include glycine 174, serine 214, and 235-236 (GG).

Belongs to the triosephosphate isomerase family. As to quaternary structure, homodimer.

It is found in the cytoplasm. It carries out the reaction D-glyceraldehyde 3-phosphate = dihydroxyacetone phosphate. It participates in carbohydrate biosynthesis; gluconeogenesis. It functions in the pathway carbohydrate degradation; glycolysis; D-glyceraldehyde 3-phosphate from glycerone phosphate: step 1/1. Functionally, involved in the gluconeogenesis. Catalyzes stereospecifically the conversion of dihydroxyacetone phosphate (DHAP) to D-glyceraldehyde-3-phosphate (G3P). This chain is Triosephosphate isomerase, found in Streptococcus mutans serotype c (strain ATCC 700610 / UA159).